Here is a 122-residue protein sequence, read N- to C-terminus: Large ribosomal subunit protein uL14 (122 aa).

Belongs to the universal ribosomal protein uL14 family. In terms of assembly, part of the 50S ribosomal subunit. Forms a cluster with proteins L3 and L19. In the 70S ribosome, L14 and L19 interact and together make contacts with the 16S rRNA in bridges B5 and B8.

Functionally, binds to 23S rRNA. Forms part of two intersubunit bridges in the 70S ribosome. This Rubrobacter xylanophilus (strain DSM 9941 / JCM 11954 / NBRC 16129 / PRD-1) protein is Large ribosomal subunit protein uL14.